Here is a 2798-residue protein sequence, read N- to C-terminus: MNGDMPHVPITTLAGIASLTDLLNQLPLPSPLPATTTKSLLFNSRIAEEVNCLLACRDDNLVSQLVHSLNQVSTDHIELKDNLGSDDPEGDIPVLLQAVLARSPNVFREKSMQNRYVQSGMMMSQYKLSQNSMHSSPASSNYQQTTISHSPSSRFVPPQTSSGNRFMPQQNSPVPSPYAPQSPAGYMPYSHPSSYTTHPQMQQASVSSPIVAGGLRNIHDNKVSGPLSGNSANHHADNPRHGSSDDYLHMVHRLSSDDGDSSTMRNAASFPLRSPQPVCSPAGSDGTPKGSRPPLILQSQSLPCSSPRDVPPDILLDSPERKQKKQKKIKLGKDEKDQNEKAAMYDIISSPTKDSTKLTLRLSRVRSSDMDQQDDMLSGMENSNVSENDIPFNVQYPGQTSKTPITPQDVNRPLNAAQCLSQQEQTAFLPANQVPVLQQNTSVATKQPQTSVVQNQQQVSQQGPIYDEVELDALAEIERIERESAIERERFSKEVQDKDKPLKKRKQDSYPQEAGGATGGNRPASQETGSTGNGSRPALMVSIDLHQAGRVDSQASITQDSDSIKKPEETKQCNDAPISVLQEDIVGSLKSIPENHPETPKKKSDPELSKSEMKQNESRLSESKPNENQLGESKSNESKLETKTETPTEELKQNENKTTESKQSESAVVEPKQNENRPCDTKPNDNKQNNTRSENTKARPETPKQKAESRPETPKQKSEGRPETPKQKGDGRPETPKQKSEGRPETPKQKGEGRPETPKHRHENRRDSGKPSTEKKPDVSKHKQDIKSDSPRLKSERAEALKQRPDGRWESLRRDHDSKQKSDDRGESERHRGDQSRVRRPETLRSSSRNDHSTKSDGSKTEKLERKHRHESGDSRDRPSGEQKSRPDSPRVKQGDTNKSRPGFKSPNSKDDKRTEGNRSKVDSNKAHTDNKAEFPSYLLGGRSGALKNFVIPKIKRDKDGNITQETKKMDMKGEQKDKVEKMGLVEDLNKGAKPVVVLQKLSLDDVQKLIKDREEKSRSSLKSIKNKPSKSNKGSIDQSVLKELPPELLAEIESTMPLCERVKMNKRKRSTVNEKPKYAEISSDEDNDSDEAFESSRKRHKKDDDKAWEYEERDRRSSGDHRRSGHSHDGRRSSGGGRYRNRSPSDSDMEDYSPPPSLSEVARKMKKKEKQKKRKAYEPKLTPEEMMDSSTFKRFTASIENILDNLEDMDFTAFGDDDEIPQELLLGKHQLNELGSESAKIKAMGIMDKLSTDKTVKVLNILEKNIQDGSKLSTLLNHNNDTEEEERLWRDLIMERVTKSADACLTTINIMTSPNMPKAVYIEDVIERVIQYTKFHLQNTLYPQYDPVYRVDPHGGGLLSSKAKRAKCSTHKQRVIVMLYNKVCDIVSSLSELLEIQLLTDTTILQVSSMGITPFFVENVSELQLCAIKLVTAVFSRYEKHRQLILEEIFTSLARLPTSKRSLRNFRLNSSDVDGEPMYIQMVTALVLQLIQCVVHLPSSEKDPNSEEDSNKKVDQDVVITNSYETAMRTAQNFLSIFLKKCGSKQGEEDYRPLFENFVQDLLSTVNKPEWPAAELLLSLLGRLLVHQFSNKSTEMALRVASLDYLGTVAARLRKDAVTSKMDQGSIERILKQVSGGEDEIQQLQKALLDYLDENTETDPSLVFSRKFYIAQWFRDTTLETEKAMKSQKDEESSDATHHAKELETTGQIMHRAENRKKFLRSIIKTTPSQFSTLKMNSDTVDYDDACLIVRYLASMRPFAQSFDIYLTQILRVLGENAIAVRTKAMKCLSEVVAVDPSILARLDMQRGVHGRLMDNSTSVREAAVELLGRFVLCRPQLAEQYYDMLIERILDTGISVRKRVIKILRDICIEQPTFPKITEMCVKMIRRVNDEEGIKKLVNETFQKLWFTPTPHNDKEAMTRKILNITDVVAACRDTGYDWFEQLLQNLLKSEEDSSYKPVKKACTQLVDNLVEHILKYEESLADSDNKGVNSGRLVACITTLFLFSKIRPQLMVKHAMTMQPYLTTKCSTQNDFMVICNVAKILELVVPLMEHPSETFLATIEEDLMKLIIKYGMTVVQHCVSCLGAVVNKVTQNFKFVWACFNRYYGAISKLKSQHQEDPNNTSLLTNKPALLRSLFTVGALCRHFDFDLEDFKGNSKVNIKDKVLELLMYFTKHSDEEVQTKAIIGLGFAFIQHPSLMFEQEVKNLYNSILSDKNSSVNLKIQVLKNLQTYLQEEDTRMQQADRDWKKVAKQEDLKEMGDVSSGMSSSIMQLYLKQVLEAFFHTQSSVRHFALNVIALTLNQGLIHPVQCVPYLIAMGTDPEPAMRNKADQQLVEIDKKYAGFIHMKAVAGMKMSYQVQQAINTCLKDPVRGFRQDESSSALCSHLYSMIRGNRQHRRAFLISLLNLFDDTAKTEVTMLLYIADNLACFPYQTQEEPLFIMHHIDITLSVSGSNLLQSFKESMVKDKRKERKTSPAKENESSESEEEVSRPRKSRKRVDSESDSDSEDDINSVMKCLPENSAPLIEFANVSQGILLLLMLKQHLKNLCGFSDSKIQKYSPSESAKVYDKAINRKTGVHFHPKQTLDFLRSDMANSKLTEDVKRSIVRQYLDFKLLMEHLDPDEEEEEGEVSASTNARNKAITSLLGGGSPKNNTAADTEDEESDGEDRGGGTSGSLRRSKRNSDSTELAAQMNESVDVMDVIAICCPKYKDRPQIARVVQRTSSGVSVQWMAGSYSGSWTEAKRRDGRKLVPWVDTIKESDIIYKKIALTSANKLTNKVVQTLRSLYAAKDGTSS.

Polar residues-rich tracts occupy residues 128 to 173 (LSQN…QNSP) and 191 to 208 (HPSSYTTHPQMQQASVSS). The interval 128–338 (LSQNSMHSSP…IKLGKDEKDQ (211 aa)) is disordered. Phosphoserine is present on residues S150 and S162. The span at 234 to 249 (HHADNPRHGSSDDYLH) shows a compositional bias: basic and acidic residues. Phosphoserine is present on residues S243, S256, S274, S280, S284, S301, S306, S318, and S350. The span at 482-500 (RESAIERERFSKEVQDKDK) shows a compositional bias: basic and acidic residues. Residues 482–940 (RESAIERERF…NKAEFPSYLL (459 aa)) are disordered. Positions 523-534 (PASQETGSTGNG) are enriched in polar residues. Basic and acidic residues-rich tracts occupy residues 562–572 (DSIKKPEETKQ), 593–625 (PENHPETPKKKSDPELSKSEMKQNESRLSESKP), 634–663 (KSNESKLETKTETPTEELKQNENKTTESKQ), 672–685 (KQNENRPCDTKPND), and 694–899 (ENTK…DTNK). A phosphothreonine mark is found at T713 and T746. The residue at position 906 (S906) is a Phosphoserine. Over residues 908-933 (NSKDDKRTEGNRSKVDSNKAHTDNKA) the composition is skewed to basic and acidic residues. The short motif at 990 to 1003 (NKGAKPVVVLQKLS) is the PxVxL motif element. 2 disordered regions span residues 1011 to 1041 (IKDREEKSRSSLKSIKNKPSKSNKGSIDQSV) and 1054 to 1186 (ESTM…TPEE). Residue K1076 is modified to N6-acetyllysine. S1083, S1084, and S1090 each carry phosphoserine. Positions 1083-1094 (SSDEDNDSDEAF) are enriched in acidic residues. Positions 1103 to 1133 (KDDDKAWEYEERDRRSSGDHRRSGHSHDGRR) are enriched in basic and acidic residues. Phosphoserine is present on residues S1144, S1146, and S1148. Y1153 carries the post-translational modification Phosphotyrosine. At S1154 the chain carries Phosphoserine. Positions 1165–1176 (KMKKKEKQKKRK) are enriched in basic residues. T1183 is subject to Phosphothreonine. A Phosphoserine modification is found at S1191. The span at 1685-1705 (AMKSQKDEESSDATHHAKELE) shows a compositional bias: basic and acidic residues. The tract at residues 1685-1706 (AMKSQKDEESSDATHHAKELET) is disordered. 5 HEAT repeats span residues 1761 to 1799 (AQSFDIYLTQILRVLGENAIAVRTKAMKCLSEVVAVDPS), 1837 to 1875 (PQLAEQYYDMLIERILDTGISVRKRVIKILRDICIEQPT), 1939 to 1978 (YDWFEQLLQNLLKSEEDSSYKPVKKACTQLVDNLVEHILK), 2221 to 2261 (VNLK…LKEM), and 2307 to 2345 (LIHPVQCVPYLIAMGTDPEPAMRNKADQQLVEIDKKYAG). Residues 2467 to 2483 (VKDKRKERKTSPAKENE) are compositionally biased toward basic and acidic residues. 2 disordered regions span residues 2467–2514 (VKDK…DDIN) and 2645–2690 (TSLL…DSTE). Residues S2487, S2503, S2505, S2507, S2509, S2646, and S2652 each carry the phosphoserine modification. Over residues 2504–2513 (ESDSDSEDDI) the composition is skewed to acidic residues. At T2661 the chain carries Phosphothreonine. Phosphoserine is present on S2666.

Belongs to the SCC2/Nipped-B family. In terms of assembly, heterodimerizes with MAU2/SCC4 to form the cohesin loading complex. The NIPBL-MAU2 heterodimer interacts with the cohesin complex composed of SMC1A/B and SMC3 heterodimer, RAD21 and STAG1/SA1. NIPBL directly contacts all members of the complex, RAD21, SMC1A/B, SMC3 and STAG1. Interacts directly (via PxVxL motif) with CBX3 and CBX5. Interacts with ZNF609 (via N-terminus). Interacts with the multiprotein complex Integrator. Interacts with BRD4. In terms of tissue distribution, spermatocytes and oocytes (at protein level).

The protein localises to the nucleus. Its subcellular location is the chromosome. Plays an important role in the loading of the cohesin complex on to DNA. Forms a heterodimeric complex (also known as cohesin loading complex) with MAU2/SCC4 which mediates the loading of the cohesin complex onto chromatin. Plays a role in cohesin loading at sites of DNA damage. Its recruitment to double-strand breaks (DSBs) sites occurs in a CBX3-, RNF8- and RNF168-dependent manner whereas its recruitment to UV irradiation-induced DNA damage sites occurs in a ATM-, ATR-, RNF8- and RNF168-dependent manner. Along with ZNF609, promotes cortical neuron migration during brain development by regulating the transcription of crucial genes in this process. Preferentially binds promoters containing paused RNA polymerase II. Up-regulates the expression of SEMA3A, NRP1, PLXND1 and GABBR2 genes, among others. This Mus musculus (Mouse) protein is Nipped-B-like protein (Nipbl).